We begin with the raw amino-acid sequence, 957 residues long: Exoribonuclease II, mitochondrial (957 aa).

A mitochondrion-targeting transit peptide spans 1–54; that stretch reads MNYRQLFLLQNVNLESNYLLKRVCLSLKLSPCKLTRKFHHACPSSSKVLKYFRI. One can recognise an RNB domain in the interval 503 to 843; that stretch reads RVDLRHLKAF…FTHHQIQSVL (341 aa).

This sequence belongs to the RNR ribonuclease family.

It localises to the mitochondrion. The enzyme catalyses Exonucleolytic cleavage in the 3'- to 5'-direction to yield nucleoside 5'-phosphates.. In terms of biological role, required for intron-independent turnover and processing of mitochondrial RNA. Participates in 3'-mtRNA processing where it hydrolyzes single-stranded RNA or partially double-stranded RNA with 3'-single-stranded tails. The chain is Exoribonuclease II, mitochondrial (rpm1) from Schizosaccharomyces pombe (strain 972 / ATCC 24843) (Fission yeast).